Reading from the N-terminus, the 309-residue chain is Palmitoyltransferase ZDHHC19 (309 aa).

The next 2 helical transmembrane spans lie at 29–49 (LFAA…FAFP) and 59–79 (WAFP…LVSL). The 51-residue stretch at 112 to 162 (QWCPKCCFHRPPRTYHCPWCNICVEDFDHHCKWVNNCIGHRNFRFFMLLVL) folds into the DHHC domain. C142 acts as the S-palmitoyl cysteine intermediate in catalysis. A run of 2 helical transmembrane segments spans residues 160–180 (LVLS…IFLV) and 193–213 (IAIV…LLLL). The span at 280 to 294 (LHPPMSPSALNPPAP) shows a compositional bias: pro residues. A disordered region spans residues 280–309 (LHPPMSPSALNPPAPTSGSLQSREGTPGAW).

Belongs to the DHHC palmitoyltransferase family.

The protein localises to the golgi apparatus membrane. Its subcellular location is the cytoplasm. It is found in the perinuclear region. The enzyme catalyses L-cysteinyl-[protein] + hexadecanoyl-CoA = S-hexadecanoyl-L-cysteinyl-[protein] + CoA. Functionally, palmitoyltransferase that mediates palmitoylation oproteins, such as RRAS and SQSTM1. Catalyzes palmitoylation of RRAS, leading to increased cell viability. Acts as a positive regulator of autophagy by mediating palmitoylation of SQSTM1, promoting affinity between SQSTM1 and ATG8 proteins and recruitment of ubiquitinated cargo proteins to autophagosomes. (Microbial infection) Promotes Chikungunya virus (CHIKV) replication by mediating viral nsp1 palmitoylation. The chain is Palmitoyltransferase ZDHHC19 from Homo sapiens (Human).